A 149-amino-acid chain; its full sequence is Oligosaccharyltransferase complex subunit OSTC (149 aa).

The Cytoplasmic segment spans residues 1–32 (MESLYRVPFLVLECPNLKLKKPPWVHMPSAMT). A helical transmembrane segment spans residues 33–53 (VYALVVVSYFLITGGIIYDVI). The Extracellular portion of the chain corresponds to 54-83 (VEPPSVGSVTDEHGHQRPVAFLAYRVNGQY). Residues 84 to 104 (IMEGLASSFLFTMGGLGFIIL) traverse the membrane as a helical segment. Residues 105–117 (DRSNAPNIPKLNR) are Cytoplasmic-facing. Residues 118–138 (FLLLFIGFVCVLLSFFMARVF) traverse the membrane as a helical segment. At 139 to 149 (MRMKLPGYLMG) the chain is on the extracellular side.

Belongs to the OSTC family. In terms of assembly, component of STT3A-containing oligosaccharyl transferase (OST-A) complex. STT3A-containing complex assembly occurs through the formation of 3 subcomplexes. Subcomplex 1 contains RPN1 and TMEM258, subcomplex 2 contains the STT3A-specific subunits STT3A, DC2/OSTC, and KCP2 as well as the core subunit OST4, and subcomplex 3 contains RPN2, DAD1, and OST48. The OST-A complex can form stable complexes with the Sec61 complex or with both the Sec61 and TRAP complexes. Interacts with PSEN1 and NCSTN; indicative for an association with the gamma-secretase complex.

Its subcellular location is the endoplasmic reticulum. It is found in the membrane. It participates in protein modification; protein glycosylation. In terms of biological role, subunit of STT3A-containing oligosaccharyl transferase (OST-A) complex that catalyzes the initial transfer of a defined glycan (Glc(3)Man(9)GlcNAc(2) in eukaryotes) from the lipid carrier dolichol-pyrophosphate to an asparagine residue within an Asn-X-Ser/Thr consensus motif in nascent polypeptide chains, the first step in protein N-glycosylation. N-glycosylation occurs cotranslationally and the complex associates with the Sec61 complex at the channel-forming translocon complex that mediates protein translocation across the endoplasmic reticulum (ER). Within the OST-A complex, acts as an adapter that anchors the OST-A complex to the Sec61 complex. May be involved in N-glycosylation of APP (amyloid-beta precursor protein). Can modulate gamma-secretase cleavage of APP by enhancing endoprotelysis of PSEN1. This Bos taurus (Bovine) protein is Oligosaccharyltransferase complex subunit OSTC.